Consider the following 450-residue polypeptide: Glutathione reductase (450 aa).

7 residues coordinate FAD: serine 14, glycine 15, glutamate 34, threonine 41, cysteine 42, lysine 50, and alanine 115. Serine 14 contacts glutathione. An intrachain disulfide couples cysteine 42 to cysteine 47. Alanine 175, isoleucine 178, glutamate 181, arginine 198, arginine 204, and glycine 262 together coordinate NADP(+). FAD is bound at residue aspartate 303. Aspartate 309 provides a ligand contact to NADP(+). Residue threonine 311 coordinates FAD. Arginine 319 is a binding site for glutathione. Valine 342 is a binding site for NADP(+). Histidine 439 lines the FAD pocket. Residue histidine 439 is the Proton acceptor of the active site.

Belongs to the class-I pyridine nucleotide-disulfide oxidoreductase family. As to quaternary structure, homodimer. FAD is required as a cofactor.

It localises to the cytoplasm. It carries out the reaction 2 glutathione + NADP(+) = glutathione disulfide + NADPH + H(+). In terms of biological role, catalyzes the reduction of glutathione disulfide (GSSG) to reduced glutathione (GSH). Constitutes the major mechanism to maintain a high GSH:GSSG ratio in the cytosol. This Streptococcus thermophilus protein is Glutathione reductase (gor).